We begin with the raw amino-acid sequence, 207 residues long: 3-demethoxyubiquinol 3-hydroxylase (207 aa).

Fe cation contacts are provided by E56, E86, H89, E138, E170, and H173.

It belongs to the COQ7 family. It depends on Fe cation as a cofactor.

Its subcellular location is the cell membrane. It catalyses the reaction a 5-methoxy-2-methyl-3-(all-trans-polyprenyl)benzene-1,4-diol + AH2 + O2 = a 3-demethylubiquinol + A + H2O. It functions in the pathway cofactor biosynthesis; ubiquinone biosynthesis. Its function is as follows. Catalyzes the hydroxylation of 2-nonaprenyl-3-methyl-6-methoxy-1,4-benzoquinol during ubiquinone biosynthesis. This is 3-demethoxyubiquinol 3-hydroxylase from Cupriavidus taiwanensis (strain DSM 17343 / BCRC 17206 / CCUG 44338 / CIP 107171 / LMG 19424 / R1) (Ralstonia taiwanensis (strain LMG 19424)).